The primary structure comprises 359 residues: Protein Wnt-5b (359 aa).

The signal sequence occupies residues 1–17 (MPSLLLLFTAALLSSWA). A disulfide bridge links Cys83 with Cys94. 2 N-linked (GlcNAc...) asparagine glycosylation sites follow: Asn93 and Asn99. Cystine bridges form between Cys133/Cys141, Cys143/Cys161, Cys217/Cys231, Cys219/Cys226, Cys288/Cys319, Cys304/Cys314, Cys318/Cys358, Cys334/Cys349, Cys336/Cys346, and Cys341/Cys342. Ser223 carries the O-palmitoleoyl serine; by PORCN lipid modification. Asn291 and Asn305 each carry an N-linked (GlcNAc...) asparagine glycan.

The protein belongs to the Wnt family. As to quaternary structure, interacts with PORCN. Palmitoleoylation is required for efficient binding to frizzled receptors. Depalmitoleoylation leads to Wnt signaling pathway inhibition.

Its subcellular location is the secreted. It is found in the extracellular space. It localises to the extracellular matrix. Its function is as follows. Ligand for members of the frizzled family of seven transmembrane receptors. Probable developmental protein. May be a signaling molecule which affects the development of discrete regions of tissues. Is likely to signal over only few cell diameters. The polypeptide is Protein Wnt-5b (WNT5B) (Homo sapiens (Human)).